The following is a 278-amino-acid chain: 4-hydroxy-tetrahydrodipicolinate reductase (278 aa).

NAD(+) contacts are provided by residues 13–18 (GAAGKM) and 111–113 (GTT). H167 acts as the Proton donor/acceptor in catalysis. Position 168 (H168) interacts with (S)-2,3,4,5-tetrahydrodipicolinate. K171 serves as the catalytic Proton donor. 177–178 (GT) lines the (S)-2,3,4,5-tetrahydrodipicolinate pocket.

Belongs to the DapB family.

It localises to the cytoplasm. It catalyses the reaction (S)-2,3,4,5-tetrahydrodipicolinate + NAD(+) + H2O = (2S,4S)-4-hydroxy-2,3,4,5-tetrahydrodipicolinate + NADH + H(+). The catalysed reaction is (S)-2,3,4,5-tetrahydrodipicolinate + NADP(+) + H2O = (2S,4S)-4-hydroxy-2,3,4,5-tetrahydrodipicolinate + NADPH + H(+). The protein operates within amino-acid biosynthesis; L-lysine biosynthesis via DAP pathway; (S)-tetrahydrodipicolinate from L-aspartate: step 4/4. Functionally, catalyzes the conversion of 4-hydroxy-tetrahydrodipicolinate (HTPA) to tetrahydrodipicolinate. In Nostoc punctiforme (strain ATCC 29133 / PCC 73102), this protein is 4-hydroxy-tetrahydrodipicolinate reductase.